We begin with the raw amino-acid sequence, 232 residues long: GFP-like non-fluorescent chromoprotein FP595 (232 aa).

Positions 63–65 (MYG) form a cross-link, 2-iminomethyl-5-imidazolinone (Met-Gly). Residue Tyr-64 is modified to (E)-2,3-didehydrotyrosine.

This sequence belongs to the GFP family. Post-translationally, contains a chromophore consisting of modified amino acid residues. The chromophore is formed by autocatalytic backbone condensation between Xaa-N and Gly-(N+2), oxidation of Tyr-(N+1) to didehydrotyrosine, and formation of a double bond to the alpha-amino nitrogen of residue Tyr-(N+1). Maturation of the chromophore requires nothing other than molecular oxygen. As to expression, tentacle tips.

In terms of biological role, pigment protein that is intensely purple in color. In Anemonia sulcata (Mediterranean snakelocks sea anemone), this protein is GFP-like non-fluorescent chromoprotein FP595.